The following is a 142-amino-acid chain: Deoxyuridine 5'-triphosphate nucleotidohydrolase (142 aa).

Residues 62 to 64, asparagine 75, and 79 to 81 each bind substrate; these read RSG and TID.

It belongs to the dUTPase family. It depends on Mg(2+) as a cofactor.

The catalysed reaction is dUTP + H2O = dUMP + diphosphate + H(+). The protein operates within pyrimidine metabolism; dUMP biosynthesis; dUMP from dCTP (dUTP route): step 2/2. Functionally, this enzyme is involved in nucleotide metabolism: it produces dUMP, the immediate precursor of thymidine nucleotides and it decreases the intracellular concentration of dUTP so that uracil cannot be incorporated into DNA. This Crocosphaera subtropica (strain ATCC 51142 / BH68) (Cyanothece sp. (strain ATCC 51142)) protein is Deoxyuridine 5'-triphosphate nucleotidohydrolase.